Reading from the N-terminus, the 491-residue chain is Protein nucleotidyltransferase YdiU (491 aa).

The ATP site is built by G88, G90, R91, K111, D123, G124, R174, and R181. D250 acts as the Proton acceptor in catalysis. N251 and D260 together coordinate Mg(2+). D260 contacts ATP.

Belongs to the SELO family. The cofactor is Mg(2+). Mn(2+) serves as cofactor.

It catalyses the reaction L-seryl-[protein] + ATP = 3-O-(5'-adenylyl)-L-seryl-[protein] + diphosphate. It carries out the reaction L-threonyl-[protein] + ATP = 3-O-(5'-adenylyl)-L-threonyl-[protein] + diphosphate. The catalysed reaction is L-tyrosyl-[protein] + ATP = O-(5'-adenylyl)-L-tyrosyl-[protein] + diphosphate. The enzyme catalyses L-histidyl-[protein] + UTP = N(tele)-(5'-uridylyl)-L-histidyl-[protein] + diphosphate. It catalyses the reaction L-seryl-[protein] + UTP = O-(5'-uridylyl)-L-seryl-[protein] + diphosphate. It carries out the reaction L-tyrosyl-[protein] + UTP = O-(5'-uridylyl)-L-tyrosyl-[protein] + diphosphate. Its function is as follows. Nucleotidyltransferase involved in the post-translational modification of proteins. It can catalyze the addition of adenosine monophosphate (AMP) or uridine monophosphate (UMP) to a protein, resulting in modifications known as AMPylation and UMPylation. This is Protein nucleotidyltransferase YdiU from Bradyrhizobium diazoefficiens (strain JCM 10833 / BCRC 13528 / IAM 13628 / NBRC 14792 / USDA 110).